A 281-amino-acid chain; its full sequence is Lectin alpha chain (281 aa).

3 N-linked (GlcNAc...) asparagine glycosylation sites follow: Asn-35, Asn-82, and Asn-140.

It belongs to the leguminous lectin family. In terms of assembly, tetramer of 2 alpha and 2 beta chains. In terms of processing, glycosylated. Post-translationally, the beta chain is produced by partial proteolytic processing of the alpha chain.

D-galactose-binding lectin. The protein is Lectin alpha chain of Lablab purpureus (Hyacinth bean).